A 1198-amino-acid polypeptide reads, in one-letter code: Structural polyprotein (1198 aa).

The tract at residues 2–15 (TKKPGGPGKNRAIN) is interaction with host EXOC1. The Cytoplasmic portion of the chain corresponds to 2-109 (TKKPGGPGKN…RKQNKRGGNE (108 aa)). The segment at 37 to 72 (LLDGRGPVRFVLALITFFKFTALAPTKALLGRWKAV) is hydrophobic; homodimerization of capsid protein C. A propeptide spans 106-127 (GGNEGSIMWLASLAVVIAYAGA) (ER anchor for the capsid protein C, removed in mature form by serine protease NS3). A helical membrane pass occupies residues 110-130 (GSIMWLASLAVVIAYAGAMKL). Residues 131 to 253 (SNFQGKLLMT…ATRYLMKTEN (123 aa)) lie on the Extracellular side of the membrane. Asn142 carries N-linked (GlcNAc...) asparagine; by host glycosylation. The helical transmembrane segment at 254–274 (WIIRNPGYAFLAATLGWMLGS) threads the bilayer. The Cytoplasmic portion of the chain corresponds to 275-279 (NNGQR). The helical transmembrane segment at 280-294 (VVFTILLLLVAPAYS) threads the bilayer. The Extracellular portion of the chain corresponds to 295–746 (FNCLGMGNRD…QVFGGAFRTL (452 aa)). 6 cysteine pairs are disulfide-bonded: Cys297–Cys324, Cys354–Cys410, Cys354–Cys415, Cys368–Cys399, Cys386–Cys410, and Cys386–Cys415. Residues 392-405 (DRGWGNGCGLFGKG) form a fusion peptide region. N-linked (GlcNAc...) asparagine; by host glycosylation occurs at Asn448. 2 disulfide bridges follow: Cys484–Cys581 and Cys598–Cys629. The helical transmembrane segment at 747–767 (FGGMSWITQGLMGALLLWMGV) threads the bilayer. Topologically, residues 768-773 (NARDRS) are cytoplasmic. A helical membrane pass occupies residues 774–794 (IALAFLATGGVLVFLATNVHA). At 795–1198 (DTGCAIDITR…CADAWGHHLH (404 aa)) the chain is on the extracellular side. Cystine bridges form between Cys798–Cys809, Cys849–Cys937, Cys973–Cys1017, Cys1074–Cys1123, Cys1085–Cys1106, and Cys1107–Cys1110. N-linked (GlcNAc...) asparagine; by host glycosylation is found at Asn924 and Asn1001. Residues 1152–1177 (VDPFSAGPSGDVSGHPGGPSQEVDGQ) are disordered.

In terms of assembly, homodimer. Interacts (via N-terminus) with host EXOC1 (via C-terminus); this interaction results in EXOC1 degradation through the proteasome degradation pathway. Interacts with host CAPRIN1; this interaction is involved in the suppression of the integrated stress response. As to quaternary structure, forms heterodimers with envelope protein E in the endoplasmic reticulum and Golgi. Homodimer; in the endoplasmic reticulum and Golgi. Interacts with protein prM. Interacts with non-structural protein 1. Post-translationally, genome polyprotein: Specific enzymatic cleavages in vivo yield mature proteins. Cleavages in the lumen of endoplasmic reticulum are performed by host signal peptidase, whereas cleavages in the cytoplasmic side are performed by serine protease NS3. Signal cleavage at the 2K-4B site requires a prior NS3 protease-mediated cleavage at the 4A-2K site. In terms of processing, cleaved in post-Golgi vesicles by a host furin, releasing the mature small envelope protein M, and peptide pr. This cleavage is incomplete as up to 30% of viral particles still carry uncleaved prM. N-glycosylated.

It localises to the secreted. It is found in the virion membrane. Its subcellular location is the host endoplasmic reticulum membrane. Its function is as follows. Plays a role in virus budding by binding to the cell membrane and gathering the viral RNA into a nucleocapsid that forms the core of a mature virus particle. During virus entry, may induce genome penetration into the host cytoplasm after hemifusion induced by the surface proteins. Can migrate to the cell nucleus where it modulates host functions. Overcomes the anti-viral effects of host EXOC1 by sequestering and degrading the latter through the proteasome degradation pathway. Inhibits the integrated stress response (ISR) in the infected cell by binding to host CAPRIN1. Functionally, inhibits RNA silencing by interfering with host Dicer. In terms of biological role, prevents premature fusion activity of envelope proteins in trans-Golgi by binding to envelope protein E at pH6.0. After virion release in extracellular space, gets dissociated from E dimers. Acts as a chaperone for envelope protein E during intracellular virion assembly by masking and inactivating envelope protein E fusion peptide. prM is the only viral peptide matured by host furin in the trans-Golgi network probably to avoid catastrophic activation of the viral fusion activity in acidic Golgi compartment prior to virion release. prM-E cleavage is inefficient, and many virions are only partially matured. These uncleaved prM would play a role in immune evasion. Its function is as follows. May play a role in virus budding. Exerts cytotoxic effects by activating a mitochondrial apoptotic pathway through M ectodomain. May display a viroporin activity. Functionally, binds to host cell surface receptor and mediates fusion between viral and cellular membranes. Envelope protein is synthesized in the endoplasmic reticulum in the form of heterodimer with protein prM. They play a role in virion budding in the ER, and the newly formed immature particle is covered with 60 spikes composed of heterodimer between precursor prM and envelope protein E. The virion is transported to the Golgi apparatus where the low pH causes dissociation of PrM-E heterodimers and formation of E homodimers. prM-E cleavage is inefficient, and many virions are only partially matured. These uncleaved prM would play a role in immune evasion. In terms of biological role, may play a role in neuroinvasiveness. This is Structural polyprotein from Japanese encephalitis virus (strain Jaoars982) (JEV).